A 1026-amino-acid chain; its full sequence is Vacuolar protein sorting-associated protein 18 homolog (1026 aa).

A coiled-coil region spans residues 858–896 (IVDFLKRNKQRLEKLERSMKEATEIASEIRDKQEKLKNR). The RING-type; degenerate zinc finger occupies 906–932 (CSHCARPISGRAFNVHSCRHFFHRECL).

Probable core component of at least two putative endosomal tethering complexes, the homotypic fusion and vacuole protein sorting (HOPS) complex and the class C core vacuole/endosome tethering (CORVET) complex. Their common core is composed of the class C Vps proteins vps-11, vps-16 and vps-18, which in HOPS further associates with vps-33.1, vps-39 and vps-41 and in CORVET with vps-8 and vps-33.2. As to expression, in hermaphrodites, expressed in coelomocytes and gonadal sheath cells.

The protein resides in the cytoplasm. The protein localises to the late endosome membrane. Its subcellular location is the lysosome membrane. It is found in the early endosome. It localises to the cytoplasmic vesicle. The protein resides in the autophagosome. The protein localises to the clathrin-coated vesicle. Its function is as follows. Plays a role in vesicle-mediated protein trafficking to lysosomal compartments including the endocytic membrane transport and autophagic pathways. Believed to act as a core component of the putative HOPS and CORVET endosomal tethering complexes which are proposed to be involved in the rab-5-to-rab-7 endosome conversion probably implicating sand-1, and via binding SNAREs and SNARE complexes to mediate tethering and docking events during SNARE-mediated membrane fusion. The HOPS complex is proposed to be recruited to rab-7 on the late endosomal membrane and to regulate late endocytic, phagocytic and autophagic traffic towards lysosomes. Within the HOPS complex, contributes to the normal development of gut granules in intestinal cells of the embryo, and also promotes the trafficking of embryonic intestinal gut granules away from lysosomes. The CORVET complex is proposed to function as a rab-5 effector to mediate early endosome fusion probably in specific endosome subpopulations. Required for fusion of endosomes and autophagosomes with lysosomes. Plays a role in the degradation of apoptotic cells during programmed cell death. In Caenorhabditis elegans, this protein is Vacuolar protein sorting-associated protein 18 homolog.